The primary structure comprises 390 residues: 3,5-dihydroxybiphenyl synthase (390 aa).

Cysteine 161 is an active-site residue.

This sequence belongs to the thiolase-like superfamily. Chalcone/stilbene synthases family. In terms of assembly, homodimer.

The enzyme catalyses benzoyl-CoA + 3 malonyl-CoA + 3 H(+) = biphenyl-3,5-diol + 4 CO2 + 4 CoA. In terms of biological role, type III polyketide synthase involved in the biosynthesis of the phytoalexins bisphenyls and dibenzofurans. Can also use salicoyl-CoA and malonyl-CoA to produce a diketide intermediate yielding 4-hydroxycoumarin after cyclization and enolization. Can also use m-hydroxybenzoyl-CoA as substrate, producing m-hydroxybenzoyl diacetic acid lactone as a derailment product. No activity with p-hydroxybenzoyl-CoA, CoA-linked cinnamic acids or acetyl-CoA. This Sorbus aucuparia (European mountain ash) protein is 3,5-dihydroxybiphenyl synthase (BIS1).